An 88-amino-acid chain; its full sequence is Defensin-like protein 98 (88 aa).

A signal peptide spans 1-29; that stretch reads MGSLRVSTVVIAVVACLSILLISPTEVDG. 4 cysteine pairs are disulfide-bonded: Cys-33-Cys-76, Cys-40-Cys-62, Cys-46-Cys-73, and Cys-50-Cys-75.

The protein belongs to the DEFL family.

It localises to the secreted. This is Defensin-like protein 98 from Arabidopsis thaliana (Mouse-ear cress).